The sequence spans 344 residues: Anthranilate phosphoribosyltransferase (344 aa).

5-phospho-alpha-D-ribose 1-diphosphate contacts are provided by residues G80, 83 to 84 (GD), T88, 90 to 93 (NIST), 108 to 116 (KHGNRSISS), and S120. G80 provides a ligand contact to anthranilate. Mg(2+) is bound at residue S92. N111 contributes to the anthranilate binding site. R166 lines the anthranilate pocket. Mg(2+) contacts are provided by D229 and E230.

It belongs to the anthranilate phosphoribosyltransferase family. Homodimer. Requires Mg(2+) as cofactor.

The enzyme catalyses N-(5-phospho-beta-D-ribosyl)anthranilate + diphosphate = 5-phospho-alpha-D-ribose 1-diphosphate + anthranilate. The protein operates within amino-acid biosynthesis; L-tryptophan biosynthesis; L-tryptophan from chorismate: step 2/5. Its function is as follows. Catalyzes the transfer of the phosphoribosyl group of 5-phosphorylribose-1-pyrophosphate (PRPP) to anthranilate to yield N-(5'-phosphoribosyl)-anthranilate (PRA). The chain is Anthranilate phosphoribosyltransferase from Chloroherpeton thalassium (strain ATCC 35110 / GB-78).